We begin with the raw amino-acid sequence, 115 residues long: Replication initiation control protein YabA (115 aa).

His90, Cys92, Cys106, and Cys109 together coordinate Zn(2+).

Belongs to the YabA family. In terms of assembly, homotetramer. Interacts with both DnaA and DnaN, acting as a bridge between these two proteins. Zn(2+) is required as a cofactor.

It is found in the cytoplasm. The protein resides in the nucleoid. Functionally, involved in control of chromosome replication initiation. Inhibits the cooperative binding of DnaA to the oriC region, thus negatively regulating initiation of chromosome replication. Inhibits the ability of DnaA-ATP to form a helix on DNA; does not disassemble preformed DnaA-DNA helices. Decreases the residence time of DnaA on the chromosome at its binding sites (oriC, replication forks and promoter-binding sites). Tethers DnaA to the replication machinery via the DNA polymerase beta sliding clamp subunit (dnaN). Associates with oriC and other DnaA targets on the chromosome in a DnaA-dependent manner. This chain is Replication initiation control protein YabA, found in Staphylococcus aureus (strain bovine RF122 / ET3-1).